Here is a 128-residue protein sequence, read N- to C-terminus: Putative pre-16S rRNA nuclease (128 aa).

It belongs to the YqgF nuclease family.

The protein localises to the cytoplasm. Its function is as follows. Could be a nuclease involved in processing of the 5'-end of pre-16S rRNA. The sequence is that of Putative pre-16S rRNA nuclease from Campylobacter lari (strain RM2100 / D67 / ATCC BAA-1060).